A 222-amino-acid chain; its full sequence is Deoxyribose-phosphate aldolase (222 aa).

The active-site Proton donor/acceptor is Asp89. The active-site Schiff-base intermediate with acetaldehyde is Lys152. Catalysis depends on Lys181, which acts as the Proton donor/acceptor.

The protein belongs to the DeoC/FbaB aldolase family. DeoC type 1 subfamily.

Its subcellular location is the cytoplasm. It carries out the reaction 2-deoxy-D-ribose 5-phosphate = D-glyceraldehyde 3-phosphate + acetaldehyde. Its pathway is carbohydrate degradation; 2-deoxy-D-ribose 1-phosphate degradation; D-glyceraldehyde 3-phosphate and acetaldehyde from 2-deoxy-alpha-D-ribose 1-phosphate: step 2/2. Its function is as follows. Catalyzes a reversible aldol reaction between acetaldehyde and D-glyceraldehyde 3-phosphate to generate 2-deoxy-D-ribose 5-phosphate. This chain is Deoxyribose-phosphate aldolase, found in Alkaliphilus oremlandii (strain OhILAs) (Clostridium oremlandii (strain OhILAs)).